The following is a 195-amino-acid chain: Recombination protein RecR (195 aa).

Residues cysteine 53–cysteine 68 form a C4-type zinc finger. One can recognise a Toprim domain in the interval glutamine 76–proline 171.

It belongs to the RecR family.

In terms of biological role, may play a role in DNA repair. It seems to be involved in an RecBC-independent recombinational process of DNA repair. It may act with RecF and RecO. This chain is Recombination protein RecR, found in Ehrlichia canis (strain Jake).